The primary structure comprises 425 residues: MAAEKPHMNLAVIGHIDHGKSTTVGRLLFETGTVPPHIIESFRKEAESKGKGSFEFAWVMDSLKEERERGITIDIAHKRFDTDKYYFTVVDCPGHRDFVKNMITGASQADAALLVVAAPDGVMEQTKEHVFLSRTLGINQLIIGINKMDAAKYDEKRYNEVKEQLSQLLKMVGYKPDDISFIPMSAFVGDNIAKKSENTPWYKGPTVLDALNALSEPEKPTNLPMRLPIQDVYSISGIGTVPVGRVETGIMKKGMKVSFMPANKEGEIKSIEMHHEEIPQALPGDNVGFNVRGIGKGDIRRGDVCGPSDVPPTVAEEFIAQVVVLHHPSALTVGYTPVFHCHTAQIACSFVELMKKLDPRTGQVKEENPTFLKTGDAAIVKIRPTQPMVIEKVKEIPQLGRFAVRDMGSTIAAGVCMDITPKQMR.

The tr-type G domain occupies 5–221 (KPHMNLAVIG…NALSEPEKPT (217 aa)). The segment at 14-21 (GHIDHGKS) is G1. 14-21 (GHIDHGKS) serves as a coordination point for GTP. Ser-21 is a Mg(2+) binding site. The interval 70 to 74 (GITID) is G2. The tract at residues 91 to 94 (DCPG) is G3. GTP is bound by residues 91 to 95 (DCPGH) and 146 to 149 (NKMD). Positions 146-149 (NKMD) are G4. The segment at 185-187 (SAF) is G5.

This sequence belongs to the TRAFAC class translation factor GTPase superfamily. Classic translation factor GTPase family. EF-Tu/EF-1A subfamily.

It localises to the cytoplasm. The enzyme catalyses GTP + H2O = GDP + phosphate + H(+). GTP hydrolase that promotes the GTP-dependent binding of aminoacyl-tRNA to the A-site of ribosomes during protein biosynthesis. In Methanoculleus marisnigri (strain ATCC 35101 / DSM 1498 / JR1), this protein is Elongation factor 1-alpha.